We begin with the raw amino-acid sequence, 24 residues long: Acidic phospholipase A2 4 (24 aa).

It belongs to the phospholipase A2 family. Group II subfamily. Ca(2+) is required as a cofactor. In terms of tissue distribution, expressed by the venom gland.

It localises to the secreted. It catalyses the reaction a 1,2-diacyl-sn-glycero-3-phosphocholine + H2O = a 1-acyl-sn-glycero-3-phosphocholine + a fatty acid + H(+). Functionally, PLA2 catalyzes the calcium-dependent hydrolysis of the 2-acyl groups in 3-sn-phosphoglycerides. The chain is Acidic phospholipase A2 4 from Trimeresurus stejnegeri (Chinese green tree viper).